Reading from the N-terminus, the 505-residue chain is Probable cytosol aminopeptidase (505 aa).

Mn(2+)-binding residues include Lys-269 and Asp-274. Lys-281 is an active-site residue. Mn(2+) contacts are provided by Asp-292, Asp-351, and Glu-353. Arg-355 is a catalytic residue.

It belongs to the peptidase M17 family. Mn(2+) is required as a cofactor.

The protein localises to the cytoplasm. It catalyses the reaction Release of an N-terminal amino acid, Xaa-|-Yaa-, in which Xaa is preferably Leu, but may be other amino acids including Pro although not Arg or Lys, and Yaa may be Pro. Amino acid amides and methyl esters are also readily hydrolyzed, but rates on arylamides are exceedingly low.. It carries out the reaction Release of an N-terminal amino acid, preferentially leucine, but not glutamic or aspartic acids.. Presumably involved in the processing and regular turnover of intracellular proteins. Catalyzes the removal of unsubstituted N-terminal amino acids from various peptides. The polypeptide is Probable cytosol aminopeptidase (Rhodococcus erythropolis (strain PR4 / NBRC 100887)).